The chain runs to 351 residues: UDP-3-O-acylglucosamine N-acyltransferase (351 aa).

The active-site Proton acceptor is the H240.

It belongs to the transferase hexapeptide repeat family. LpxD subfamily. In terms of assembly, homotrimer.

The enzyme catalyses a UDP-3-O-[(3R)-3-hydroxyacyl]-alpha-D-glucosamine + a (3R)-hydroxyacyl-[ACP] = a UDP-2-N,3-O-bis[(3R)-3-hydroxyacyl]-alpha-D-glucosamine + holo-[ACP] + H(+). It functions in the pathway bacterial outer membrane biogenesis; LPS lipid A biosynthesis. Functionally, catalyzes the N-acylation of UDP-3-O-acylglucosamine using 3-hydroxyacyl-ACP as the acyl donor. Is involved in the biosynthesis of lipid A, a phosphorylated glycolipid that anchors the lipopolysaccharide to the outer membrane of the cell. In Pseudomonas syringae pv. tomato (strain ATCC BAA-871 / DC3000), this protein is UDP-3-O-acylglucosamine N-acyltransferase.